We begin with the raw amino-acid sequence, 426 residues long: Serine--tRNA ligase (426 aa).

Positions 103 to 129 (VPNLPDDSVPTGKDENDNPEIRRWGTP) are disordered. Basic and acidic residues predominate over residues 114-125 (GKDENDNPEIRR). Position 230–232 (230–232 (TAE)) interacts with L-serine. 261–263 (RSE) is an ATP binding site. Position 284 (Glu284) interacts with L-serine. 348-351 (EISS) is an ATP binding site. Residue Ser384 coordinates L-serine.

It belongs to the class-II aminoacyl-tRNA synthetase family. Type-1 seryl-tRNA synthetase subfamily. In terms of assembly, homodimer. The tRNA molecule binds across the dimer.

The protein localises to the cytoplasm. It carries out the reaction tRNA(Ser) + L-serine + ATP = L-seryl-tRNA(Ser) + AMP + diphosphate + H(+). It catalyses the reaction tRNA(Sec) + L-serine + ATP = L-seryl-tRNA(Sec) + AMP + diphosphate + H(+). It functions in the pathway aminoacyl-tRNA biosynthesis; selenocysteinyl-tRNA(Sec) biosynthesis; L-seryl-tRNA(Sec) from L-serine and tRNA(Sec): step 1/1. Its function is as follows. Catalyzes the attachment of serine to tRNA(Ser). Is also able to aminoacylate tRNA(Sec) with serine, to form the misacylated tRNA L-seryl-tRNA(Sec), which will be further converted into selenocysteinyl-tRNA(Sec). The chain is Serine--tRNA ligase from Dichelobacter nodosus (strain VCS1703A).